The primary structure comprises 351 residues: Protein Wnt-4 (351 aa).

Positions 1-22 (MSPRSCLRSLRLLVFAVFSAAA) are cleaved as a signal peptide. 11 cysteine pairs are disulfide-bonded: C78–C89, C128–C136, C138–C155, C206–C220, C208–C215, C280–C311, C296–C306, C310–C350, C326–C341, C328–C338, and C333–C334. N88 carries an N-linked (GlcNAc...) asparagine glycan. S212 carries the O-palmitoleoyl serine; by PORCN lipid modification. N-linked (GlcNAc...) asparagine glycosylation is present at N297.

Belongs to the Wnt family. As to quaternary structure, interacts with PORCN. Interacts with PKD1. Post-translationally, palmitoleoylation is required for efficient binding to frizzled receptors. Depalmitoleoylation leads to Wnt signaling pathway inhibition. In adults in lung and brain.

It is found in the secreted. It localises to the extracellular space. Its subcellular location is the extracellular matrix. Ligand for members of the frizzled family of seven transmembrane receptors. Plays an important role in the embryonic development of the urogenital tract and the lung. Required for normal mesenchyme to epithelium transition during embryonic kidney development. Required for the formation of early epithelial renal vesicles during kidney development. Required for normal formation of the Mullerian duct in females, and normal levels of oocytes in the ovaries. Required for normal down-regulation of 3 beta-hydroxysteroid dehydrogenase in the ovary. Required for normal lung development and for normal patterning of trachael cartilage rings. This is Protein Wnt-4 (Wnt4) from Mus musculus (Mouse).